Reading from the N-terminus, the 397-residue chain is Chorismate synthase (397 aa).

The NADP(+) site is built by Arg-40 and Arg-46. FMN-binding positions include Arg-129–Ser-131, Gln-257–Ala-258, Gly-302, Lys-317–Ser-321, and Arg-343.

This sequence belongs to the chorismate synthase family. As to quaternary structure, homotetramer. FMNH2 serves as cofactor.

It carries out the reaction 5-O-(1-carboxyvinyl)-3-phosphoshikimate = chorismate + phosphate. It functions in the pathway metabolic intermediate biosynthesis; chorismate biosynthesis; chorismate from D-erythrose 4-phosphate and phosphoenolpyruvate: step 7/7. Its function is as follows. Catalyzes the anti-1,4-elimination of the C-3 phosphate and the C-6 proR hydrogen from 5-enolpyruvylshikimate-3-phosphate (EPSP) to yield chorismate, which is the branch point compound that serves as the starting substrate for the three terminal pathways of aromatic amino acid biosynthesis. This reaction introduces a second double bond into the aromatic ring system. The polypeptide is Chorismate synthase (Chlorobium luteolum (strain DSM 273 / BCRC 81028 / 2530) (Pelodictyon luteolum)).